Consider the following 132-residue polypeptide: D-beta-hydroxybutyrate dehydrogenase, mitochondrial (132 aa).

3 to 27 (LVTGCDSGFGFSLAKHLHSKGFLVF) lines the NAD(+) pocket. Residue Lys17 is modified to N6-acetyllysine. Residue Ser59 participates in substrate binding. The Proton acceptor role is filled by Tyr66. Lys70 is modified (N6-acetyllysine). A glycan (O-linked (GlcNAc) serine) is linked at Ser77. Ser104 is subject to Phosphoserine.

This sequence belongs to the short-chain dehydrogenases/reductases (SDR) family. As to quaternary structure, homotetramer.

The protein resides in the mitochondrion inner membrane. The protein localises to the mitochondrion matrix. It carries out the reaction (R)-3-hydroxybutanoate + NAD(+) = acetoacetate + NADH + H(+). With respect to regulation, requires phosphatidylcholine as an allosteric activator for enzymatic activity. The sequence is that of D-beta-hydroxybutyrate dehydrogenase, mitochondrial from Mesocricetus auratus (Golden hamster).